The following is a 371-amino-acid chain: Neuropeptide S receptor (371 aa).

Residues methionine 1–glutamine 52 are Extracellular-facing. N-linked (GlcNAc...) asparagine glycans are attached at residues asparagine 4 and asparagine 13. A helical membrane pass occupies residues leucine 53–serine 73. The Cytoplasmic portion of the chain corresponds to threonine 74–arginine 82. The helical transmembrane segment at methionine 83–leucine 103 threads the bilayer. Residues threonine 104–valine 123 lie on the Extracellular side of the membrane. A disulfide bond links cysteine 121 and cysteine 197. Residues valine 124–isoleucine 144 form a helical membrane-spanning segment. Topologically, residues aspartate 145–lysine 164 are cytoplasmic. A helical transmembrane segment spans residues valine 165–phenylalanine 185. Over glycine 186 to threonine 212 the chain is Extracellular. The chain crosses the membrane as a helical span at residues isoleucine 213–valine 233. The Cytoplasmic portion of the chain corresponds to isoleucine 234 to tyrosine 275. Residues serine 276–leucine 296 form a helical membrane-spanning segment. Residues aspartate 297–serine 312 are Extracellular-facing. The helical transmembrane segment at valine 313 to phenylalanine 333 threads the bilayer. The Cytoplasmic portion of the chain corresponds to serine 334–isoleucine 371.

Belongs to the G-protein coupled receptor 1 family. Vasopressin/oxytocin receptor subfamily.

It is found in the cell membrane. In terms of biological role, G-protein coupled receptor for neuropeptide S (NPS). Promotes mobilization of intracellular Ca(2+) stores. Inhibits cell growth in response to NPS binding. Involved in pathogenesis of asthma and other IgE-mediated diseases. This chain is Neuropeptide S receptor (Npsr1), found in Mus musculus (Mouse).